The sequence spans 362 residues: Metacaspase-3 (362 aa).

Residues His-174 and Cys-230 contribute to the active site.

This sequence belongs to the peptidase C14B family.

This chain is Metacaspase-3 (AMC3), found in Arabidopsis thaliana (Mouse-ear cress).